Reading from the N-terminus, the 736-residue chain is Myosin-7 (736 aa).

Residues 1 to 342 (NWMVTRINAT…LLGLLEEMRD (342 aa)) form the Myosin motor domain. The segment at 219 to 241 (LNKLMTNLRSTHPHFVRCIIPNE) is actin-binding. An IQ domain is found at 345 to 374 (LSRIITRIQAQSRGVLSRMEYKKLLERRDS). Positions 403 to 736 (LLKSAETEKE…MNKKREAEFQ (334 aa)) form a coiled coil. Serine 701 is subject to Phosphoserine. The interval 716 to 736 (EAGGATSVQIEMNKKREAEFQ) is disordered. Over residues 727–736 (MNKKREAEFQ) the composition is skewed to basic and acidic residues.

Belongs to the TRAFAC class myosin-kinesin ATPase superfamily. Myosin family. Muscle myosin is a hexameric protein that consists of 2 heavy chain subunits (MHC), 2 alkali light chain subunits (MLC) and 2 regulatory light chain subunits (MLC-2). Interacts with ECPAS. Interacts (via C-terminus) with LRRC39.

The protein localises to the cytoplasm. Its subcellular location is the myofibril. It localises to the sarcomere. Myosins are actin-based motor molecules with ATPase activity essential for muscle contraction. Forms regular bipolar thick filaments that, together with actin thin filaments, constitute the fundamental contractile unit of skeletal and cardiac muscle. The polypeptide is Myosin-7 (MYH7) (Oryctolagus cuniculus (Rabbit)).